The sequence spans 504 residues: Anaerobic nitric oxide reductase transcription regulator NorR (504 aa).

D57 is modified (4-aspartylphosphate). Residues 187 to 416 form the Sigma-54 factor interaction domain; sequence MIGLSPGMTQ…LEHAIHRAVV (230 aa). ATP-binding positions include 215–222 and 278–287; these read GETGTGKE and ADNGTLFLDE. A DNA-binding region (H-T-H motif) is located at residues 479 to 498; sequence WAASARMLETDVANLHRLAK.

The protein operates within nitrogen metabolism; nitric oxide reduction. Its function is as follows. Required for the expression of anaerobic nitric oxide (NO) reductase, acts as a transcriptional activator for at least the norVW operon. Activation also requires sigma-54. The protein is Anaerobic nitric oxide reductase transcription regulator NorR of Escherichia coli (strain SMS-3-5 / SECEC).